Reading from the N-terminus, the 111-residue chain is UPF0060 membrane protein XAC3064 (111 aa).

Transmembrane regions (helical) follow at residues 8-28 (LLLF…PYLW), 32-52 (GGSV…VWLL), 64-84 (AAYG…VDGV), and 91-111 (LLGA…PRSA).

This sequence belongs to the UPF0060 family.

The protein resides in the cell inner membrane. This is UPF0060 membrane protein XAC3064 from Xanthomonas axonopodis pv. citri (strain 306).